A 226-amino-acid polypeptide reads, in one-letter code: Fibrillarin-like rRNA/tRNA 2'-O-methyltransferase (226 aa).

Residues 85 to 86, 104 to 105, 129 to 130, and 149 to 152 each bind S-adenosyl-L-methionine; these read TT, EF, DA, and DVAQ.

Belongs to the methyltransferase superfamily. Fibrillarin family. Interacts with nop5. Component of box C/D small ribonucleoprotein (sRNP) particles that contain rpl7ae, FlpA and nop5, plus a guide RNA.

Its function is as follows. Involved in pre-rRNA and tRNA processing. Utilizes the methyl donor S-adenosyl-L-methionine to catalyze the site-specific 2'-hydroxyl methylation of ribose moieties in rRNA and tRNA. Site specificity is provided by a guide RNA that base pairs with the substrate. Methylation occurs at a characteristic distance from the sequence involved in base pairing with the guide RNA. This chain is Fibrillarin-like rRNA/tRNA 2'-O-methyltransferase, found in Thermococcus gammatolerans (strain DSM 15229 / JCM 11827 / EJ3).